A 285-amino-acid polypeptide reads, in one-letter code: Putative ankyrin repeat protein R551 (285 aa).

4 ANK repeats span residues 99-129 (DLKSGILNSVKYHQSKLINILLDKNIDPIKI), 157-186 (NDFDFVYPLAAHGELDIIKLVMHYYQLQDE), 188-214 (IGKICVQAIMNGRVNIVEHFLTSEAFR), and 215-249 (SAPDLMYGFFIRGIEHGGHINITKYFIDKGLCIQQ).

This chain is Putative ankyrin repeat protein R551, found in Acanthamoeba polyphaga (Amoeba).